The following is a 502-amino-acid chain: ATP synthase subunit alpha, chloroplastic (502 aa).

Residue 170–177 participates in ATP binding; that stretch reads GDRQTGKT.

It belongs to the ATPase alpha/beta chains family. F-type ATPases have 2 components, CF(1) - the catalytic core - and CF(0) - the membrane proton channel. CF(1) has five subunits: alpha(3), beta(3), gamma(1), delta(1), epsilon(1). CF(0) has four main subunits: a, b, b' and c.

Its subcellular location is the plastid. The protein resides in the chloroplast thylakoid membrane. It catalyses the reaction ATP + H2O + 4 H(+)(in) = ADP + phosphate + 5 H(+)(out). Its function is as follows. Produces ATP from ADP in the presence of a proton gradient across the membrane. The alpha chain is a regulatory subunit. The sequence is that of ATP synthase subunit alpha, chloroplastic from Rhodomonas salina (Cryptomonas salina).